Reading from the N-terminus, the 318-residue chain is Bis(5'-nucleosyl)-tetraphosphatase, symmetrical (318 aa).

A disordered region spans residues 269-318 (PGREVTGPAPVARAPRRPRERLGRQRSRGNRGNAGNTAVPAKPPVDTPQD). Basic residues predominate over residues 282 to 297 (APRRPRERLGRQRSRG). Over residues 309 to 318 (AKPPVDTPQD) the composition is skewed to pro residues.

This sequence belongs to the Ap4A hydrolase family.

The catalysed reaction is P(1),P(4)-bis(5'-adenosyl) tetraphosphate + H2O = 2 ADP + 2 H(+). In terms of biological role, hydrolyzes diadenosine 5',5'''-P1,P4-tetraphosphate to yield ADP. The protein is Bis(5'-nucleosyl)-tetraphosphatase, symmetrical of Xanthomonas oryzae pv. oryzae (strain PXO99A).